The primary structure comprises 548 residues: Glucose-6-phosphate isomerase (548 aa).

E355 (proton donor) is an active-site residue. Residues H386 and K514 contribute to the active site.

Belongs to the GPI family.

The protein resides in the cytoplasm. It carries out the reaction alpha-D-glucose 6-phosphate = beta-D-fructose 6-phosphate. It functions in the pathway carbohydrate biosynthesis; gluconeogenesis. It participates in carbohydrate degradation; glycolysis; D-glyceraldehyde 3-phosphate and glycerone phosphate from D-glucose: step 2/4. Functionally, catalyzes the reversible isomerization of glucose-6-phosphate to fructose-6-phosphate. This Hamiltonella defensa subsp. Acyrthosiphon pisum (strain 5AT) protein is Glucose-6-phosphate isomerase.